The chain runs to 150 residues: Anthrone oxygenase gedH (150 aa).

The next 4 helical transmembrane spans lie at 1–21, 41–61, 73–93, and 128–148; these read MANP…PVFL, GHKL…WVAA, PVLA…CMVS, and LFPL…LVGG.

This sequence belongs to the anthrone oxygenase family.

Its subcellular location is the membrane. The catalysed reaction is emodin anthrone + O2 = emodin + H2O + H(+). It functions in the pathway secondary metabolite biosynthesis. Anthrone oxygenase; part of the gene cluster that mediates the biosynthesis of geodin, an intermediate in the biosynthesis of other natural products. The pathway begins with the synthesis of atrochrysone thioester by the polyketide synthase (PKS) gedC. The atrochrysone carboxyl ACP thioesterase gedB then breaks the thioester bond and releases the atrochrysone carboxylic acid from gedC. The atrochrysone carboxylic acid is then converted to atrochrysone which is further transformed into emodin anthrone. The next step is performed by the emodin anthrone oxygenase gedH that catalyzes the oxidation of emodinanthrone to emodin. Emodin O-methyltransferase encoded probably by gedA then catalyzes methylation of the 8-hydroxy group of emodin to form questin. Ring cleavage of questin by questin oxidase gedK leads to desmethylsulochrin via several intermediates including questin epoxide. Another methylation step probably catalyzed by methyltransferase gedG leads to the formation of sulochrin which is further converted to dihydrogeodin by the sulochrin halogenase gedL. Finally, the dihydrogeodin oxidase gedJ catalyzes the stereospecific phenol oxidative coupling reaction converting dihydrogeodin to geodin. The chain is Anthrone oxygenase gedH from Aspergillus terreus (strain NIH 2624 / FGSC A1156).